Reading from the N-terminus, the 138-residue chain is Diuretic hormone 1 (138 aa).

Residues 1–19 (MMWWAIWCVMVVVSSAASA) form the signal peptide. A propeptide spanning residues 20-78 (APAPDSAPMDLVQIDSAGPDDESLGYAVSSLEGRYGAEAPWLYLLAEMPRDSQIGRAAV) is cleaved from the precursor. I121 carries the isoleucine amide modification. A propeptide spanning residues 125-138 (GLQWSRSEQPSAYY) is cleaved from the precursor.

The protein belongs to the sauvagine/corticotropin-releasing factor/urotensin I family.

The protein resides in the secreted. Functionally, regulation of fluid secretion. This is Diuretic hormone 1 from Manduca sexta (Tobacco hawkmoth).